Reading from the N-terminus, the 412-residue chain is Histone-lysine N-methyltransferase SUV39H1 (412 aa).

An interaction with SIRT1 region spans residues 1–89 (MAENLKGCSV…LKCIRVLKQF (89 aa)). The region spanning 43-101 (FEVEYLCDYKKIREQEYYLVKWRGYPDSENTWEPRQNLKCIRVLKQFHKDLERELVRRH) is the Chromo domain. The Pre-SET domain maps to 179 to 240 (VGCECQDCLL…DCPNRVVQKG (62 aa)). The Zn(2+) site is built by Cys181, Cys183, Cys186, Cys194, Cys195, Cys222, Cys226, Cys228, and Cys232. The region spanning 243 to 366 (YDLCIFRTND…AGEELTFDYN (124 aa)) is the SET domain. 254-256 (RGW) contacts S-adenosyl-L-methionine. Positions 255–377 (GWGVRTLEKI…QVDPVDMEST (123 aa)) are mediates interaction with MECOM. Lys266 carries the N6-acetyllysine modification. S-adenosyl-L-methionine contacts are provided by residues Tyr297 and 323 to 324 (NH). Cys326 is a binding site for Zn(2+). Ser391 carries the post-translational modification Phosphoserine. One can recognise a Post-SET domain in the interval 396 to 412 (VRIECKCGTTACRKYLF). Zn(2+)-binding residues include Cys400, Cys402, and Cys407.

Belongs to the class V-like SAM-binding methyltransferase superfamily. Histone-lysine methyltransferase family. Suvar3-9 subfamily. As to quaternary structure, interacts with CCAR2 and GFI1B. Component of the eNoSC complex, composed of SIRT1, SUV39H1 and RRP8. Interacts with H3 and H4 histones. Interacts with DNMT3B, CBX1, CBX4, MBD1, RUNX1, RUNX3, MYOD1, SMAD5 and RB1. Interacts with SBF1 through the SET domain. Interacts with HDAC1 and HDAC2 through the N-terminus and associates with the core histone deacetylase complex composed of HDAC1, HDAC2, RBBP4 and RBBP7. Interacts (via SET domain) with MECOM; enhances MECOM transcriptional repression activity. Interacts with LMNA; the interaction increases stability of SUV39H1. The large PER complex involved in the histone methylation is composed of at least PER2, CBX3, TRIM28, SUV39H1 and/or SUV39H2; CBX3 mediates the formation of the complex. Post-translationally, phosphorylated on serine residues, and to a lesser degree, on threonine residues. In terms of processing, acetylated at Lys-266, leading to inhibition of enzyme activity. SIRT1-mediated deacetylation relieves this inhibition. Ubiquitinated by the DCX(DCAF13) E3 ubiquitin ligase complex, leading to its degradation. Widely expressed.

It localises to the nucleus. It is found in the nucleus lamina. The protein resides in the nucleoplasm. The protein localises to the chromosome. Its subcellular location is the centromere. The catalysed reaction is L-lysyl(9)-[histone H3] + 3 S-adenosyl-L-methionine = N(6),N(6),N(6)-trimethyl-L-lysyl(9)-[histone H3] + 3 S-adenosyl-L-homocysteine + 3 H(+). Its activity is regulated as follows. Negatively regulated by CCAR2. Its function is as follows. Histone methyltransferase that specifically trimethylates 'Lys-9' of histone H3 using monomethylated H3 'Lys-9' as substrate. H3 'Lys-9' trimethylation represents a specific tag for epigenetic transcriptional repression by recruiting HP1 (CBX1, CBX3 and/or CBX5) proteins to methylated histones. Mainly functions in heterochromatin regions, thereby playing a central role in the establishment of constitutive heterochromatin at pericentric and telomere regions. H3 'Lys-9' trimethylation is also required to direct DNA methylation at pericentric repeats. SUV39H1 is targeted to histone H3 via its interaction with RB1 and is involved in many processes, such as repression of MYOD1-stimulated differentiation, regulation of the control switch for exiting the cell cycle and entering differentiation, repression by the PML-RARA fusion protein, BMP-induced repression, repression of switch recombination to IgA and regulation of telomere length. Component of the eNoSC (energy-dependent nucleolar silencing) complex, a complex that mediates silencing of rDNA in response to intracellular energy status and acts by recruiting histone-modifying enzymes. The eNoSC complex is able to sense the energy status of cell: upon glucose starvation, elevation of NAD(+)/NADP(+) ratio activates SIRT1, leading to histone H3 deacetylation followed by dimethylation of H3 at 'Lys-9' (H3K9me2) by SUV39H1 and the formation of silent chromatin in the rDNA locus. Recruited by the PER complex to the E-box elements of the circadian target genes such as PER2 itself or PER1, contributes to the conversion of local chromatin to a heterochromatin-like repressive state through H3 'Lys-9' trimethylation. The protein is Histone-lysine N-methyltransferase SUV39H1 (Suv39h1) of Mus musculus (Mouse).